We begin with the raw amino-acid sequence, 558 residues long: REST corepressor spr-1 (558 aa).

Residues 1 to 106 are disordered; that stretch reads MDLYDDDGES…KVKGPLSNTN (106 aa). Over residues 36-56 the composition is skewed to acidic residues; the sequence is TIEENVPEVEENTLLEEDSLV. Residues 69–80 are compositionally biased toward basic residues; sequence KPSKSKRKRKRS. Positions 107–192 constitute an ELM2 domain; sequence KEINVGTEFQ…SAIAEVARRN (86 aa). In terms of domain architecture, SANT 1 spans 193-244; it reads ELKDVWTDQEITLFENCYQIFGKNFSQIRSALCHRSLQSIVQFYYESKKRVK. The segment at 271-325 adopts a GATA-type zinc-finger fold; the sequence is AIFESMCDNCGEKAENMQINNAMNRPECRACLIYFNQTGVPRPTSLRLVLAERIR. A compositionally biased stretch (polar residues) spans 378–402; the sequence is CTENGNVGETSSPSAQKTEIQSESD. Positions 378–406 are disordered; sequence CTENGNVGETSSPSAQKTEIQSESDGSGP. Residues 481–532 form the SANT 2 domain; the sequence is HYSQDWTQLERSQVIRCFNMYGAHFEHIADVIGTKTPDQVYQFYLENQKAID.

Belongs to the CoREST family. In terms of assembly, probably part of a large repressor complex. Interacts with histone demethylase spr-5/lsd-1.

It localises to the nucleus. Probable corepressor protein, which probably participates in the transcriptional repression of the presenilin protein hop-1. Probably acts via the formation of a multiprotein complex that deacetylates and demethylates specific sites on histones. Acts redundantly with the transcriptional repressor lin-35 to play a role in vulval morphogenesis and promote germline proliferation. The sequence is that of REST corepressor spr-1 from Caenorhabditis elegans.